The primary structure comprises 134 residues: Proline-rich protein 4 (134 aa).

The N-terminal stretch at 1 to 16 (MLLVLLSVVLLALSSA) is a signal peptide. Positions 28–134 (FTFTIPDVED…ARHPQEQPLW (107 aa)) are disordered. A compositionally biased stretch (pro residues) spans 47-59 (QRPPPEGLLPRPP). The span at 110 to 119 (VSLQEASSFF) shows a compositional bias: polar residues. The span at 120 to 134 (QRDRPARHPQEQPLW) shows a compositional bias: basic and acidic residues.

As to expression, abundantly expressed in lacrimal gland where it is found in the acinar cells but not in the intralobular ducts. Also found in the submandibular gland, the parotid and sublingual glands.

Its subcellular location is the secreted. In Homo sapiens (Human), this protein is Proline-rich protein 4 (PRR4).